Here is a 558-residue protein sequence, read N- to C-terminus: MSPTALDACDHHDSFSLPAQDQSKVHPSARRTPEGGLIKVESDSTVYEADGIKAKFTDRGASVIKGSDGKLSVKKTEKNFEFFTKSTVGRVGLMLVGLGGNNGTTVLATNLANKYNISWHTKNGIQQPNYIGSVVRASTVRLGTDPETGKDVFVPISDMLPMVHPNDFVIGGWDISSLSMDKAMLRAKVLEWDLQRQLIPLMENVKPLPSIYYPDFIAANQADRADNLIPGDDKKVHLEHIRADIRRFKADNHLDSVVVLWTANTERYADIIPGVNDTADNLLKAVETSHEEVSPSTIFAMASILEGVPFINGSPQNTFVPGCIELAEKHKAFIGGDDFKSGQTKVKSVLAEFLVNAGIKPLSISSYNHLGNNDGKNLSSQRQFRSKEISKSSVVDDMVAANPILYKTAEDLSKATGEIVKKGEHPDHIVVIKHVPAVGDSKRAIDEYYSELLMGGRNVMNIFNECEDSLLATPLIFDLAILAELLTRVTYRENATGEWQPLYSVLSLLSYMLKAPLVKPGEDVVNSLNRQRNALEQFLKACLGLEHSNDLLLNTRVW.

Positions Met1–Glu34 are disordered. The NAD(+) site is built by Gly99, Gly100, Asn101, Asn102, Asp174, Ser210, Ile211, Gln221, Arg224, Thr262, Ala263, Asn264, Thr265, Gly313, Ser314, Asp338, Ser341, Asn372, Asn373, Asp374, Lys387, Gly439, Asp440, Asp468, and Ser469.

It belongs to the myo-inositol 1-phosphate synthase family. In terms of assembly, homotetramer. NAD(+) serves as cofactor.

Its subcellular location is the cytoplasm. The catalysed reaction is D-glucose 6-phosphate = 1D-myo-inositol 3-phosphate. Its pathway is polyol metabolism; myo-inositol biosynthesis; myo-inositol from D-glucose 6-phosphate: step 1/2. Key enzyme in myo-inositol biosynthesis pathway that catalyzes the conversion of glucose 6-phosphate to 1-myo-inositol 1-phosphate in a NAD-dependent manner. Rate-limiting enzyme in the synthesis of all inositol-containing compounds. This Cryptococcus neoformans var. grubii serotype A (strain H99 / ATCC 208821 / CBS 10515 / FGSC 9487) (Filobasidiella neoformans var. grubii) protein is Inositol-3-phosphate synthase.